Here is a 362-residue protein sequence, read N- to C-terminus: Class I histocompatibility antigen, Gogo-B*0101 alpha chain (362 aa).

The first 24 residues, 1–24 (MRVTAPRTLLLLLSAALALTETWA), serve as a signal peptide directing secretion. The alpha-1 stretch occupies residues 25–114 (GSHSMRYFDT…ALRYYNQSEA (90 aa)). Over 25–308 (GSHSMRYFDT…EPSSQSTIPI (284 aa)) the chain is Extracellular. A glycan (N-linked (GlcNAc...) asparagine) is linked at asparagine 110. The segment at 115–206 (GSHTIQRMFG…ENGRETLQRA (92 aa)) is alpha-2. 2 cysteine pairs are disulfide-bonded: cysteine 125–cysteine 188 and cysteine 227–cysteine 283. Residues 207–298 (DTPKTHVTHH…GLPKPLTLRW (92 aa)) are alpha-3. The Ig-like C1-type domain maps to 209–295 (PKTHVTHHPI…QHEGLPKPLT (87 aa)). Residues 299–308 (EPSSQSTIPI) are connecting peptide. A helical membrane pass occupies residues 309 to 332 (VGIVAGLAVLAVVVIGAVVTAVIC). The Cytoplasmic segment spans residues 333–362 (RRKSSGGKGGSYSQAASSDSAQGSDVSLTA). Residues 335–362 (KSSGGKGGSYSQAASSDSAQGSDVSLTA) are disordered. Positions 343 to 362 (SYSQAASSDSAQGSDVSLTA) are enriched in low complexity. Residues serine 356 and serine 359 each carry the phosphoserine modification.

It belongs to the MHC class I family. In terms of assembly, heterodimer of an alpha chain and a beta chain (beta-2-microglobulin).

The protein localises to the membrane. Its function is as follows. Involved in the presentation of foreign antigens to the immune system. This chain is Class I histocompatibility antigen, Gogo-B*0101 alpha chain, found in Gorilla gorilla gorilla (Western lowland gorilla).